The chain runs to 448 residues: Signal recognition particle 54 kDa protein (448 aa).

GTP contacts are provided by residues 107–114 (GIQGSGKT), 189–193 (DTAGR), and 247–250 (TKLD).

The protein belongs to the GTP-binding SRP family. SRP54 subfamily. As to quaternary structure, part of the signal recognition particle protein translocation system, which is composed of SRP and FtsY. Archaeal SRP consists of a 7S RNA molecule of 300 nucleotides and two protein subunits: SRP54 and SRP19.

The protein localises to the cytoplasm. It catalyses the reaction GTP + H2O = GDP + phosphate + H(+). Functionally, involved in targeting and insertion of nascent membrane proteins into the cytoplasmic membrane. Binds to the hydrophobic signal sequence of the ribosome-nascent chain (RNC) as it emerges from the ribosomes. The SRP-RNC complex is then targeted to the cytoplasmic membrane where it interacts with the SRP receptor FtsY. This is Signal recognition particle 54 kDa protein from Thermococcus gammatolerans (strain DSM 15229 / JCM 11827 / EJ3).